The following is a 435-amino-acid chain: Serine--tRNA ligase (435 aa).

241–243 lines the L-serine pocket; it reads TAE. 272-274 serves as a coordination point for ATP; the sequence is RSE. E295 contacts L-serine. 359–362 is a binding site for ATP; the sequence is EISS. An L-serine-binding site is contributed by S395.

It belongs to the class-II aminoacyl-tRNA synthetase family. Type-1 seryl-tRNA synthetase subfamily. As to quaternary structure, homodimer. The tRNA molecule binds across the dimer.

Its subcellular location is the cytoplasm. The catalysed reaction is tRNA(Ser) + L-serine + ATP = L-seryl-tRNA(Ser) + AMP + diphosphate + H(+). It carries out the reaction tRNA(Sec) + L-serine + ATP = L-seryl-tRNA(Sec) + AMP + diphosphate + H(+). The protein operates within aminoacyl-tRNA biosynthesis; selenocysteinyl-tRNA(Sec) biosynthesis; L-seryl-tRNA(Sec) from L-serine and tRNA(Sec): step 1/1. Its function is as follows. Catalyzes the attachment of serine to tRNA(Ser). Is also able to aminoacylate tRNA(Sec) with serine, to form the misacylated tRNA L-seryl-tRNA(Sec), which will be further converted into selenocysteinyl-tRNA(Sec). This chain is Serine--tRNA ligase, found in Actinobacillus pleuropneumoniae serotype 5b (strain L20).